The sequence spans 126 residues: MSALDTSIRVEVKTEYIEQQSSPEDEKYLFSYTITIINLGEQAAKLETRHWIITDANGNTSEVQGAGVVGETPTIAPNTAYQYTSGTVLDTPLGIMHGTYGMVSESGEHFQATIRPFRLATPGLLH.

The region spanning Ser-2–His-126 is the ApaG domain.

This Shewanella baltica (strain OS223) protein is Protein ApaG.